The primary structure comprises 992 residues: Aminopeptidase Q (992 aa).

Residues 2–13 lie on the Cytoplasmic side of the membrane; that stretch reads GPPSSSGFYVSR. A helical; Signal-anchor for type II membrane protein membrane pass occupies residues 14–34; it reads AVALLLAALAAALLLALAVLA. The Extracellular segment spans residues 35–992; sequence ALYGRCARVQ…RMTAWLRKNT (958 aa). Residues 48 to 92 form a disordered region; that stretch reads LHHGGVPDAASSPRGTQEEQLPTWPPRPTREPAGTATPGHWRPPG. Asparagine 133 carries N-linked (GlcNAc...) asparagine glycosylation. A substrate-binding site is contributed by glutamate 241. 4 N-linked (GlcNAc...) asparagine glycosylation sites follow: asparagine 262, asparagine 289, asparagine 347, and asparagine 361. 380–384 contacts substrate; sequence SAMEN. Histidine 416 provides a ligand contact to Zn(2+). Residue glutamate 417 is the Proton acceptor of the active site. Zn(2+) is bound by residues histidine 420 and glutamate 439. N-linked (GlcNAc...) asparagine glycosylation is present at asparagine 489. Tyrosine 505 serves as the catalytic Proton donor. Asparagine 584, asparagine 602, asparagine 609, asparagine 655, asparagine 811, asparagine 850, and asparagine 889 each carry an N-linked (GlcNAc...) asparagine glycan.

This sequence belongs to the peptidase M1 family. The cofactor is Zn(2+). Expressed in skin. Expression levels do not differ between dark and light skin areas.

The protein resides in the membrane. Its function is as follows. Metalloprotease which may be important for placentation by regulating biological activity of key peptides at the embryo-maternal interface. Involved in coat pigmentation patterns. During skin development, may be required to establish the periodicity of tabby markings, initiating a pre-pattern at or before hair follicle development. The chain is Aminopeptidase Q (LVRN) from Acinonyx jubatus (Cheetah).